The sequence spans 287 residues: Thymidylate synthase (287 aa).

Residue arginine 21 participates in dUMP binding. Histidine 51 serves as a coordination point for (6R)-5,10-methylene-5,6,7,8-tetrahydrofolate. Residue 150-151 (RR) coordinates dUMP. Cysteine 170 acts as the Nucleophile in catalysis. DUMP contacts are provided by residues 190–193 (RSGD), asparagine 201, and 231–233 (HIY). (6R)-5,10-methylene-5,6,7,8-tetrahydrofolate is bound at residue aspartate 193. Alanine 286 serves as a coordination point for (6R)-5,10-methylene-5,6,7,8-tetrahydrofolate.

It belongs to the thymidylate synthase family. Bacterial-type ThyA subfamily. In terms of assembly, homodimer.

It localises to the cytoplasm. It carries out the reaction dUMP + (6R)-5,10-methylene-5,6,7,8-tetrahydrofolate = 7,8-dihydrofolate + dTMP. It functions in the pathway pyrimidine metabolism; dTTP biosynthesis. Its function is as follows. Catalyzes the reductive methylation of 2'-deoxyuridine-5'-monophosphate (dUMP) to 2'-deoxythymidine-5'-monophosphate (dTMP) while utilizing 5,10-methylenetetrahydrofolate (mTHF) as the methyl donor and reductant in the reaction, yielding dihydrofolate (DHF) as a by-product. This enzymatic reaction provides an intracellular de novo source of dTMP, an essential precursor for DNA biosynthesis. This chain is Thymidylate synthase, found in Mycoplasma pneumoniae (strain ATCC 29342 / M129 / Subtype 1) (Mycoplasmoides pneumoniae).